We begin with the raw amino-acid sequence, 450 residues long: uncharacterized protein (450 aa).

Lys-283 is subject to N6-(pyridoxal phosphate)lysine.

It belongs to the class-III pyridoxal-phosphate-dependent aminotransferase family. Pyridoxal 5'-phosphate serves as cofactor.

In terms of biological role, essential for glycerol catabolism. This is an uncharacterized protein from Bacillus subtilis (strain 168).